We begin with the raw amino-acid sequence, 151 residues long: Aspartate carbamoyltransferase regulatory chain (151 aa).

Zn(2+)-binding residues include C108, C113, C138, and C141.

The protein belongs to the PyrI family. Contains catalytic and regulatory chains. It depends on Zn(2+) as a cofactor.

Involved in allosteric regulation of aspartate carbamoyltransferase. The polypeptide is Aspartate carbamoyltransferase regulatory chain (Pyrobaculum arsenaticum (strain DSM 13514 / JCM 11321 / PZ6)).